Here is a 346-residue protein sequence, read N- to C-terminus: Carbamoyl phosphate synthase small chain (346 aa).

The tract at residues 1–160 (MEDGSVFAGR…SVKEPVLLGE (160 aa)) is CPSase. L-glutamine contacts are provided by S39, G209, and G211. A Glutamine amidotransferase type-1 domain is found at 164-346 (CIGVVDCGVK…FLKLVERHGH (183 aa)). Catalysis depends on C237, which acts as the Nucleophile. The L-glutamine site is built by L238, Q241, N280, G282, and Y283. Catalysis depends on residues H320 and E322.

This sequence belongs to the CarA family. In terms of assembly, composed of two chains; the small (or glutamine) chain promotes the hydrolysis of glutamine to ammonia, which is used by the large (or ammonia) chain to synthesize carbamoyl phosphate. Tetramer of heterodimers (alpha,beta)4.

The enzyme catalyses hydrogencarbonate + L-glutamine + 2 ATP + H2O = carbamoyl phosphate + L-glutamate + 2 ADP + phosphate + 2 H(+). It carries out the reaction L-glutamine + H2O = L-glutamate + NH4(+). The protein operates within amino-acid biosynthesis; L-arginine biosynthesis; carbamoyl phosphate from bicarbonate: step 1/1. It participates in pyrimidine metabolism; UMP biosynthesis via de novo pathway; (S)-dihydroorotate from bicarbonate: step 1/3. Its function is as follows. Small subunit of the glutamine-dependent carbamoyl phosphate synthetase (CPSase). CPSase catalyzes the formation of carbamoyl phosphate from the ammonia moiety of glutamine, carbonate, and phosphate donated by ATP, constituting the first step of 2 biosynthetic pathways, one leading to arginine and/or urea and the other to pyrimidine nucleotides. The small subunit (glutamine amidotransferase) binds and cleaves glutamine to supply the large subunit with the substrate ammonia. The sequence is that of Carbamoyl phosphate synthase small chain from Pyrobaculum aerophilum (strain ATCC 51768 / DSM 7523 / JCM 9630 / CIP 104966 / NBRC 100827 / IM2).